Here is a 306-residue protein sequence, read N- to C-terminus: Protein SULFUR DEFICIENCY-INDUCED 1 (306 aa).

TPR repeat units follow at residues 1–22, 71–104, 107–140, 167–200, and 202–233; these read MERS…NLMK, DSAL…CSKN, DSLD…IYQG, SRLL…EPDA, and KSCN…RVLG. Positions 72–139 form a coiled coil; the sequence is SALKDMAVVM…LKRKLRQIYQ (68 aa). A coiled-coil region spans residues 238–260; it reads RTRQRAEELLSELESSLPRMRDA. One copy of the TPR 6 repeat lies at 270–304; the sequence is LDDDFVLGLEEMTSTSFKSKRLPIFEQISSFRNTL.

Belongs to the MS5 protein family.

The protein localises to the nucleus. Involved in the utilization of stored sulfate under sulfur-deficient conditions. This is Protein SULFUR DEFICIENCY-INDUCED 1 from Arabidopsis thaliana (Mouse-ear cress).